Consider the following 417-residue polypeptide: D-galactonate dehydratase family member RspA (417 aa).

Substrate is bound by residues Q43 and H127. Y158 (proton donor/acceptor) is an active-site residue. D223 lines the Mg(2+) pocket. The Proton donor/acceptor role is filled by H225. Mg(2+) is bound by residues E249 and E275. 5 residues coordinate substrate: E275, R296, H325, D329, and E352.

The protein belongs to the mandelate racemase/muconate lactonizing enzyme family. GalD subfamily. It depends on Mg(2+) as a cofactor.

The catalysed reaction is D-gluconate = 2-dehydro-3-deoxy-D-gluconate + H2O. Its function is as follows. Has low D-gluconate dehydratase activity (in vitro), suggesting that it has no significant role in D-gluconate degradation in vivo. Has no detectable activity with a panel of 70 other acid sugars (in vitro). The sequence is that of D-galactonate dehydratase family member RspA (rspA) from Pantoea ananatis (strain LMG 20103).